The chain runs to 1134 residues: Mediator of RNA polymerase II transcription subunit 12 (1134 aa).

Belongs to the Mediator complex subunit 12 family. Component of the srb8-11 complex which consists of rb8, srb9(TRAP240), srb10 and srb11. The srb8-11 complex associates with the Mediator complex thereby blocking association with RNA polymerase II and leading to reduced transcriptional activation by Mediator.

The protein resides in the nucleus. Its function is as follows. Component of the srb8-11 complex. The srb8-11 complex is a regulatory module of the Mediator complex which is itself involved in regulation of basal and activated RNA polymerase II-dependent transcription. The srb8-11 complex may be involved in the transcriptional repression of a subset of genes regulated by Mediator. It may inhibit the association of the Mediator complex with RNA polymerase II to form the holoenzyme complex. This chain is Mediator of RNA polymerase II transcription subunit 12 (srb8), found in Schizosaccharomyces pombe (strain 972 / ATCC 24843) (Fission yeast).